We begin with the raw amino-acid sequence, 55 residues long: U2-theraphotoxin-Cg1a (55 aa).

A propeptide spanning residues 1-19 (DSPAWLKSMERIFQSEERE) is cleaved from the precursor. 3 disulfides stabilise this stretch: C20–C34, C27–C39, and C33–C47.

Belongs to the neurotoxin 10 (Hwtx-1) family. 06 (F4b) subfamily. As to expression, expressed by the venom gland.

The protein localises to the secreted. Its function is as follows. Probable ion channel inhibitor. This chain is U2-theraphotoxin-Cg1a, found in Chilobrachys guangxiensis (Chinese earth tiger tarantula).